The following is a 156-amino-acid chain: MPRKGPAPKHPVVVDPVYGSPLVTALVNKVLLSGKKSVAERIVYGALEGAKNKTGNDPVVTLKRALDNVKPTLEVRSRRVGGATYQVPVEVRAGRSTTLALRWIVGYSRGRREKTMTERLMNELIDASNGLGASVKRREDTHKMAESNKAFAHYRW.

The protein belongs to the universal ribosomal protein uS7 family. As to quaternary structure, part of the 30S ribosomal subunit. Contacts proteins S9 and S11.

Its function is as follows. One of the primary rRNA binding proteins, it binds directly to 16S rRNA where it nucleates assembly of the head domain of the 30S subunit. Is located at the subunit interface close to the decoding center, probably blocks exit of the E-site tRNA. In Parafrankia sp. (strain EAN1pec), this protein is Small ribosomal subunit protein uS7.